The sequence spans 761 residues: MTDGGMLISPSALQDPGDGARPEDIAMDCTDGEEELCLEEILTLYSQPINEEQAWAVCYQCCRWLTQKHRRKETGVSPPGRIAGPGDVRIRKDGNVKLYQPSNPDKHTPPSSSIEIIESLGIMIYKALDYGLKEHEERELSPPLEQLIDLMTNMADTETDCPDEGYEATEEEDEGEEENAEVSNVRGYRDIISLCLSHLPSPSDAPNHYQAVCRALYAETKELRTFLEKIKSAKENLRKMEGETEEPVRDLNELQNADWARFWVQVMRDLRHGVKLKKVQERQYNPLAIEYQLTPYEMLMDDIRSKRYKLRKVMVNGDIPPRLKKSAHEIILEFIRSRPPLNPVSARKLKPHAPQPPTLHERILEEIRSERKLRPVSPDMIRRSRLGAGKSISTPQDLFRSSDIPDGPRKLAISTLSLANGTSPARSPVNGVAGGHSLSQRKRLLKAPTLAELDSSDSEEEQSTRKSDSSSSISTSLVEDTSPESVMGKKPPPQFLPISSTPQPDKRIAPQRRHSIEKEAPTNIRHFLPPSRQNSKSLAHALGSGHAEEFCFPVECLTLTVEEVMHIRQVLVKAELEKFQQYKDIYNALKKGKLCFSCRSKKFSLFTWSYTCQFCKRPVCSQCCKKMKLPSKPHASLPISSLGPSILPKKEPGASSAPTDKTSSTSSHKKNSLQRSLSRSSKHGDRSSSKDELELPEQFTEDWSTMEVCVDCKKFINDIISNSRRNLSTKRARLHRRTHSVYSSSTSSSNYKPTERTIKEV.

Disordered regions lie at residues 1 to 23 (MTDGGMLISPSALQDPGDGARPE) and 160 to 183 (DCPDEGYEATEEEDEGEEENAEVS). Residues 36 to 223 (LCLEEILTLY…RALYAETKEL (188 aa)) enclose the KIND domain. Acidic residues predominate over residues 160-180 (DCPDEGYEATEEEDEGEEENA). Positions 218–246 (AETKELRTFLEKIKSAKENLRKMEGETEE) form a coiled coil. WH2 domains follow at residues 295 to 313 (PYEMLMDDIRSKRYKLRKV) and 359 to 376 (LHERILEEIRSERKLRPV). Disordered regions lie at residues 375–406 (PVSPDMIRRSRLGAGKSISTPQDLFRSSDIPD) and 419–539 (ANGT…KSLA). Residues 469–480 (SSSSISTSLVED) are compositionally biased toward low complexity. Positions 504–520 (PDKRIAPQRRHSIEKEA) are enriched in basic and acidic residues. The spir-box stretch occupies residues 557–577 (LTLTVEEVMHIRQVLVKAELE). Disordered regions lie at residues 630–694 (PSKP…DELE) and 728–761 (STKRARLHRRTHSVYSSSTSSSNYKPTERTIKEV). A compositionally biased stretch (low complexity) spans 636-647 (SLPISSLGPSIL). Residues 682-693 (KHGDRSSSKDEL) show a composition bias toward basic and acidic residues. Basic residues predominate over residues 728–739 (STKRARLHRRTH). Positions 740 to 749 (SVYSSSTSSS) are enriched in low complexity.

Belongs to the spire family.

It is found in the cytoplasm. The protein localises to the cytoskeleton. Its subcellular location is the cytosol. It localises to the cleavage furrow. The protein resides in the perinuclear region. It is found in the cell membrane. The protein localises to the cytoplasmic vesicle membrane. Acts as an actin nucleation factor, remains associated with the slow-growing pointed end of the new filament. Involved in intracellular vesicle transport along actin fibers, providing a novel link between actin cytoskeleton dynamics and intracellular transport. Required for asymmetric spindle positioning and asymmetric cell division during meiosis. Required for normal formation of the cleavage furrow and for polar body extrusion during female germ cell meiosis. Also acts in the nucleus: together with FMN2, promotes assembly of nuclear actin filaments in response to DNA damage in order to facilitate movement of chromatin and repair factors after DNA damage. In addition, promotes innate immune signaling downstream of dsRNA sensing. Mechanistically, contributes to IRF3 phosphorylation and activation downstream of MAVS and upstream of TBK1. The sequence is that of Protein spire homolog 1 from Danio rerio (Zebrafish).